An 89-amino-acid chain; its full sequence is Small ribosomal subunit protein bS20 (89 aa).

Residues 1-10 (MKNRSAIKRH) show a composition bias toward basic residues. Residues 1–30 (MKNRSAIKRHNQSEVRRMRNRSAKSEVRTT) form a disordered region. Basic and acidic residues predominate over residues 11-30 (NQSEVRRMRNRSAKSEVRTT).

The protein belongs to the bacterial ribosomal protein bS20 family.

Functionally, binds directly to 16S ribosomal RNA. This is Small ribosomal subunit protein bS20 from Treponema denticola (strain ATCC 35405 / DSM 14222 / CIP 103919 / JCM 8153 / KCTC 15104).